An 88-amino-acid chain; its full sequence is Small ribosomal subunit protein uS19 (88 aa).

The protein belongs to the universal ribosomal protein uS19 family.

Functionally, protein S19 forms a complex with S13 that binds strongly to the 16S ribosomal RNA. In Chlamydia felis (strain Fe/C-56) (Chlamydophila felis), this protein is Small ribosomal subunit protein uS19.